The sequence spans 3623 residues: MSSQFLWGFVTLLMIAELDGKTGKPEQRGQKRIADLHQPRMTTEEGNLVFLTSSTQNIEFRTGSLGKIKLNDEDLGECLHQIQRNKDDIIDLRKNTTGLPQNILSQVHQLNSKLVDLERDFQNLQQNVERKVCSSNPCLNGGTCVNLHDSFVCICPSQWKGLFCSEDVNECVVYSGTPFGCQSGSTCVNTVGSFRCDCTPDTYGPQCASKYNDCEQGSKQLCKHGICEDLQRVHHGQPNFHCICDAGWTTPPNGISCTEDKDECSLQPSPCSEHAQCFNTQGSFYCGACPKGWQGNGYECQDINECEINNGGCSQAPLVPCLNTPGSFSCGNCPAGFSGDGRVCTPVDICSIHNGGCHPEATCSSSPVLGSFLPVCTCPPGYTGNGYGSNGCVRLSNICSRHPCVNGQCIETVSSYFCKCDSGWSGQNCTENINDCSSNPCLNGGTCIDGINGFTCDCTSSWTGYYCQTPQAACGGILSGTQGTFAYHSPNDTYIHNVNCFWIVRTDEEKVLHVTFTFFDLESASNCPREYLQIHDGDSSADFPLGRYCGSRPPQGIHSSANALYFHLYSEYIRSGRGFTARWEAKLPECGGILTDNYGSITSPGYPGNYPPGRDCVWQVLVNPNSLITFTFGTLSLESHNDCSKDYLEIRDGPFHQDPVLGKFCTSLSTPPLKTTGPAARIHFHSDSETSDKGFHITYLTTQSDLDCGGNYTDTDGELLLPPLSGPFSHSRQCVYLITQAQGEQIVINFTHVELESQMGCSHTYIEVGDHDSLLRKICGNETLFPIRSVSNKVWIRLRIDALVQKASFRADYQVACGGMLRGEGFFRSPFYPNAYPGRRTCRWTISQPQRQVVLLNFTDFQIGSSASCDTDYIEIGPSSVLGSPGNEKFCSSNIPSFITSVYNILYVTFVKSSSMENRGFTAKFSSDKLECGEVLTASTGIIESPGHPNVYPRGVNCTWHVVVQRGQLIRLEFSSFYLEFHYNCTNDYLEIYDTAAQTFLGRYCGKSIPPSLTSNSNSIKLIFVSDSALAHEGFSINYEAIDASSVCLYDYTDNFGMLSSPNFPNNYPSNWECIYRITVGLNQQIALHFTDFTLEDYFGSQCVDFVEIRDGGYETSPLVGIYCGSVLPPTIISHSNKLWLKFKSDAALTAKGFSAYWDGSSTGCGGNLTTPTGVLTSPNYPMPYYHSSECYWRLEASHGSPFELEFQDFHLEHHPSCSLDYLAVFDGPTTNSRLIDKLCGDTTPAPIRSNKDVVLLKLRTDAGQQGRGFEINFRQRCDNVVIVNKTSGILESINYPNPYDKNQRCNWTIQATTGNTVNYTFLGFDVESYMNCSTDYVELYDGPQWMGRYCGNNMPPPGATTGSQLHVLFHTDGINSGEKGFKMQWFTHGCGGEMSGTAGSFSSPGYPNSYPHNKECIWNIRVAPGSSIQLTIHDFDVEYHTSCNYDSLEIYAGLDFNSPRIAQLCSQSPSANPMQVSSTGNELAIRFKTDSTLNGRGFNASWRAVPGGCGGIIQLSRGEIHSPNYPNNYRANTECSWIIQVERHHRVLLNITDFDLEAPDSCLRLMDGSSSTNARVASVCGRQQPPNSIIASGNSLFVRFRSGSSSQNRGFRAEFREECGGRIMTDSSDTIFSPLYPHNYLHNQNCSWIIEAQPPFNHITLSFTHFQLQNSTDCTRDFVEILDGNDYDAPVQGRYCGFSLPHPIISFGNALTVRFVTDSTRSFEGFRAIYSASTSSCGGSFYTLDGIFNSPDYPADYHPNAECVWNIASSPGNRLQLSFLSFNLENSLNCNKDFVEIREGNATGHLIGRYCGNSLPGNYSSAEGHSLWVRFVSDGSGTGMGFQARFKNIFGNNNIVGTHGKIASPFWPGKYPYNSNYKWVVNVDAYHIIHGRILEMDIEPTTNCFYDSLKIYDGFDTHSRLIGTYCGTQTESFSSSRNSLTFQFSSDSSVSGRGFLLEWFAVDVSDSTPPTIAPGACGGFMVTGDTPVHIFSPGWPREYANGADCIWIIYAPDSTVELNILSLDIEPQQSCNYDKLIVKDGDSDLSPELAVLCGVSPPGPIRSTGEYMYIRFTSDTSVAGTGFNASFHKSCGGYLHADRGVITSPKYPDTYLPNLNCSWHVLVQTGLTIAVHFEQPFQIQNRDSFCSQGDYLVLRNGPDNHSPPLGPSGRNGRFCGMYAPSTLFTSGNEMFVQFISDSSNGGQGFKIRYEAKSLACGGTVYIHDADSDGYLTSPNYPANYPQHAECIWILEAPPGRSIQLQFEDQFNIEDTPNCSVSYLELRDGANSNARLVSKLCGHTLPHSWVSSRERIYLKFHTDGGSSYMGFKAKYSIASCGGTVSGDSGVIESIGYPTLPYANNVFCQWFIRGLPGHYLTLSFEDFNLQSSPGCTKDFVEIWENHTSGRVLGRYCGNSTPSSVDTSSNVASVKFVTDGSVTASGFRLQFKSSRQVCGGDLHGPTGTFTSPNYPNPNPHARICEWTITVQEGRRIVLTFTNLRLSTQPSCNSEHLIVFNGIRSNSPLLQKLCSRVNVTNEFKSSGNTMKVVFFTDGSRPYGGFTASYTSTEDAVCGGFLPSVSGGNFSSPGYNGIRDYARNLDCEWTLSNPNRENSSISIYFLELSIESHQDCTFDVLEFRVGDADGPLIEKFCSLSAPTAPLVIPYPQVWIHFVSNERVEYTGFYIEYSFTDCGGIRTGDNGVISSPNYPNLYSAWTHCSWLLKAPEGHTITLTFSDFLLEAHPTCTSDSVTVRNGDSPGSPVIGRYCGQSVPRPIQSGSNQLIVTFNTNNQGQTRGFYATWTTNALGCGGTFHSANGTIKSPHWPQTFPENSRCSWTVITHESKHWEISFDSNFRIPSSDSQCQNSFVKVWEGRLMINKTLLATSCGDVAPSPIVTSGNIFTAVFQSEEMAAQGFSASFISRCGRTFNTSPGDIISPNFPKQYDNNMNCTYLIDADPQSLVILTFVSFHLEDRSAITGTCDHDGLHIIKGRNLSSTPLVTICGSETLRPLTVDGPVLLNFYSDAYTTDFGFKISYRAITCGGIYNESSGILRSPSYSYSNYPNNLYCVYSLHVRSSRVIIIRFNDFDVAPSNLCAHDFLEVFDGPSIGNRSLGKFCGSTRPQTVKSTNSSLTLLFKTDSSQTARGWKIFFRETIGPQQGCGGYLTEDNQSFVSPDSDSNGRYDKGLSCIWYIVAPENKLVKLTFNVFTLEGPSSAGSCVYDYVQIADGASINSYLGGKFCGSRMPAPFISSGNFLTFQFVSDVTVEMRGFNATYTFVDMPCGGTYNATSTPQNASSPHLSNIGRPYSTCTWVIAAPPQQQVQITVWDLQLPSQDCSQSYLELQDSVQTGGNRVTQFCGANYTTLPVFYSSMSTAVVVFKSGVLNRNSQVQFSYQIADCNREYNQTFGNLKSPGWPQNYDNNLDCTIILRAPQNHSISLFFYWFQLEDSRQCMNDFLEVRNGGSSTSPLLDKYCSNLLPNPVFSQSNELYLHFHSDHSVTNNGYEIIWTSSAAGCGGTLLGDEGIFTNPGFPDSYPNNTHCEWTIVAPSGRPVSVGFPFLSIDSSGGCDQNYLIVFNGPDANSPPFGPLCGINTGIAPFYASSNRVFIRFHAEYTTRLSGFEIMWSS.

Positions Met-1 to Gly-20 are cleaved as a signal peptide. Residues Lys-21 to Arg-32 constitute a propeptide, removed in mature form. The segment at Pro-39 to Gly-46 is interaction with AMN. N-linked (GlcNAc...) asparagine glycosylation is present at Asn-95. An EGF-like 1 domain is found at Glu-129–Ser-165. Cystine bridges form between Cys-133–Cys-144, Cys-138–Cys-153, Cys-155–Cys-164, Cys-171–Cys-187, Cys-181–Cys-196, Cys-198–Cys-207, Cys-264–Cys-277, Cys-271–Cys-286, and Cys-289–Cys-300. Residues Asp-167 to Ala-208 enclose the EGF-like 2; calcium-binding domain. Residues Asp-260–Gln-301 form the EGF-like 3; calcium-binding domain. Residues Asp-302 to Thr-345 form the EGF-like 4; calcium-binding domain. 2 consecutive EGF-like domains span residues Pro-346–Asn-385 and Leu-395–Thr-430. Intrachain disulfides connect Cys-350-Cys-363, Cys-357-Cys-376, Cys-399-Cys-409, Cys-404-Cys-418, Cys-420-Cys-429, Cys-436-Cys-447, Cys-441-Cys-456, Cys-458-Cys-467, Cys-474-Cys-500, Cys-527-Cys-549, Cys-590-Cys-616, Cys-643-Cys-665, and Cys-708-Cys-734. A glycan (N-linked (GlcNAc...) asparagine) is linked at Asn-428. The EGF-like 7; calcium-binding domain maps to Asn-432–Gln-468. CUB domains are found at residues Cys-474–Lys-586, Cys-590–Thr-702, Cys-708–Ala-816, Cys-817–Asp-928, Cys-932–Ile-1042, Cys-1048–Ser-1161, Cys-1165–Arg-1277, Cys-1278–His-1389, Cys-1391–Val-1506, Cys-1510–Glu-1619, Cys-1620–Ser-1734, Cys-1738–Ile-1850, Gly-1852–Val-1963, Cys-1978–Ser-2091, Cys-2092–Lys-2213, Cys-2217–Ala-2334, Cys-2336–Ser-2448, Cys-2452–Thr-2565, Cys-2570–Thr-2687, Cys-2689–Asn-2801, Cys-2805–Arg-2919, Cys-2920–Ile-3035, Cys-3037–Thr-3150, Cys-3157–Val-3274, Cys-3278–Ala-3393, Cys-3395–Ser-3507, and Cys-3511–Ser-3623. An N-linked (GlcNAc...) asparagine glycan is attached at Asn-491. N-linked (GlcNAc...) asparagine glycans are attached at residues Asn-711 and Asn-749. A disulfide bridge connects residues Cys-761 and Cys-779. A glycan (N-linked (GlcNAc...) asparagine) is linked at Asn-781. Cys-817 and Cys-842 are oxidised to a cystine. Asn-857 carries an N-linked (GlcNAc...) asparagine glycan. 2 cysteine pairs are disulfide-bonded: Cys-869–Cys-891 and Cys-932–Cys-958. N-linked (GlcNAc...) asparagine glycosylation is present at Asn-957. Glu-980 lines the Ca(2+) pocket. Asn-984 carries N-linked (GlcNAc...) asparagine glycosylation. A disulfide bond links Cys-985 and Cys-1005. Asp-988, Asp-1027, and Leu-1030 together coordinate Ca(2+). A disulfide bridge links Cys-1048 with Cys-1074. Ca(2+)-binding residues include Glu-1096, Asp-1105, and Asp-1146. The cysteines at positions 1165 and 1191 are disulfide-linked. An N-linked (GlcNAc...) asparagine glycan is attached at Asn-1168. Positions 1213, 1221, 1262, 1264, and 1265 each coordinate Ca(2+). A disulfide bridge links Cys-1218 with Cys-1240. A disulfide bridge connects residues Cys-1278 and Cys-1306. Residues Asn-1285, Asn-1307, and Asn-1319 are each glycosylated (N-linked (GlcNAc...) asparagine). Glu-1328 is a binding site for Ca(2+). Asn-1332 is a glycosylation site (N-linked (GlcNAc...) asparagine). A disulfide bridge links Cys-1333 with Cys-1351. Residues Asp-1336, Asp-1373, and Ile-1375 each coordinate Ca(2+). 2 cysteine pairs are disulfide-bonded: Cys-1391–Cys-1417 and Cys-1444–Cys-1466. N-linked (GlcNAc...) asparagine glycosylation occurs at Asn-1500. Cysteines 1510 and 1536 form a disulfide. 3 N-linked (GlcNAc...) asparagine glycosylation sites follow: Asn-1551, Asn-1646, and Asn-1671. Cys-1620 and Cys-1647 are disulfide-bonded. Disulfide bonds link Cys-1675/Cys-1697, Cys-1738/Cys-1764, and Cys-1791/Cys-1812. N-linked (GlcNAc...) asparagine glycosylation is found at Asn-1802 and Asn-1819. Intrachain disulfides connect Cys-1905/Cys-1927, Cys-1978/Cys-2006, and Cys-2032/Cys-2054. N-linked (GlcNAc...) asparagine glycans are attached at residues Asn-2085 and Asn-2117. Disulfide bonds link Cys-2092–Cys-2118 and Cys-2217–Cys-2247. An N-linked (GlcNAc...) asparagine glycan is attached at Asn-2274. Disulfide bonds link Cys-2275–Cys-2297, Cys-2336–Cys-2363, Cys-2390–Cys-2411, Cys-2452–Cys-2478, and Cys-2505–Cys-2527. The N-linked (GlcNAc...) asparagine glycan is linked to Asn-2400. N-linked (GlcNAc...) asparagine glycans are attached at residues Asn-2531, Asn-2581, and Asn-2610. Cys-2570 and Cys-2599 are joined by a disulfide. 7 cysteine pairs are disulfide-bonded: Cys-2628/Cys-2649, Cys-2689/Cys-2715, Cys-2742/Cys-2764, Cys-2805/Cys-2831, Cys-2860/Cys-2883, Cys-2920/Cys-2946, and Cys-2977/Cys-2999. Residues Asn-2813, Asn-2875, Asn-2945, and Asn-2989 are each glycosylated (N-linked (GlcNAc...) asparagine). The residue at position 3008 (Thr-3008) is a Phosphothreonine. Intrachain disulfides connect Cys-3037-Cys-3064 and Cys-3091-Cys-3113. Asn-3042, Asn-3106, Asn-3125, and Asn-3165 each carry an N-linked (GlcNAc...) asparagine glycan. 2 disulfides stabilise this stretch: Cys-3157–Cys-3185 and Cys-3215–Cys-3237. 3 N-linked (GlcNAc...) asparagine glycosylation sites follow: Asn-3268, Asn-3283, and Asn-3290. 2 cysteine pairs are disulfide-bonded: Cys-3278/Cys-3306 and Cys-3332/Cys-3354. N-linked (GlcNAc...) asparagine glycosylation is found at Asn-3357, Asn-3400, and Asn-3430. Cys-3395 and Cys-3421 are disulfide-bonded. Disulfide bonds link Cys-3448–Cys-3470, Cys-3511–Cys-3537, and Cys-3564–Cys-3586. The N-linked (GlcNAc...) asparagine glycan is linked to Asn-3533.

As to quaternary structure, interacts with AMN. Component of the cubam complex composed of one CUBN trimer and one AMN chain. The cubam complex can dimerize. Interacts with LRP2 in a dual-receptor complex in a calcium-dependent manner. Found in a complex with PID1/PCLI1, LRP1 and CUBNI. Interacts with LRP1 and PID1/PCLI1. The precursor is cleaved by a trans-Golgi proteinase furin, removing a propeptide. Post-translationally, N-glycosylated. As to expression, expressed to intestinal, renal and yalk sac apical membranes. In kidney, expressed in the proximal tubule.

It localises to the cell membrane. The protein resides in the endosome membrane. The protein localises to the lysosome membrane. In terms of biological role, endocytic receptor which plays a role in lipoprotein, vitamin and iron metabolism by facilitating their uptake. Acts together with LRP2 to mediate endocytosis of high-density lipoproteins, GC, hemoglobin, ALB, TF and SCGB1A1. Acts together with AMN to mediate endocytosis of the CBLIF-cobalamin complex. Binds to ALB, MB, Kappa and lambda-light chains, TF, hemoglobin, GC, SCGB1A1, APOA1, high density lipoprotein, and the CBLIF-cobalamin complex. Ligand binding requires calcium. Serves as important transporter in several absorptive epithelia, including intestine, renal proximal tubules and embryonic yolk sac. May play an important role in the development of the peri-implantation embryo through internalization of APOA1 and cholesterol. Binds to LGALS3 at the maternal-fetal interface. This is Cubilin (Cubn) from Rattus norvegicus (Rat).